Consider the following 79-residue polypeptide: Conotoxin VnMKLT1-01122 (79 aa).

The signal sequence occupies residues Met-1 to Ala-22. A propeptide spanning residues Asp-23–Asn-48 is cleaved from the precursor. The residue at position 51 (Gln-51) is a Pyrrolidone carboxylic acid. 3 cysteine pairs are disulfide-bonded: Cys-53–Cys-70, Cys-60–Cys-74, and Cys-69–Cys-78.

This sequence belongs to the conotoxin O1 superfamily. Expressed by the venom duct.

Its subcellular location is the secreted. The chain is Conotoxin VnMKLT1-01122 from Conus ventricosus (Mediterranean cone).